Reading from the N-terminus, the 229-residue chain is Uracil-DNA glycosylase (229 aa).

The active-site Proton acceptor is aspartate 71.

Belongs to the uracil-DNA glycosylase (UDG) superfamily. UNG family.

The protein resides in the cytoplasm. The catalysed reaction is Hydrolyzes single-stranded DNA or mismatched double-stranded DNA and polynucleotides, releasing free uracil.. Functionally, excises uracil residues from the DNA which can arise as a result of misincorporation of dUMP residues by DNA polymerase or due to deamination of cytosine. This is Uracil-DNA glycosylase from Campylobacter lari (strain RM2100 / D67 / ATCC BAA-1060).